We begin with the raw amino-acid sequence, 616 residues long: Dihydroxy-acid dehydratase (616 aa).

A Mg(2+)-binding site is contributed by Asp81. Cys122 is a [2Fe-2S] cluster binding site. Asp123 and Lys124 together coordinate Mg(2+). Residue Lys124 is modified to N6-carboxylysine. Cys195 contributes to the [2Fe-2S] cluster binding site. Mg(2+) is bound at residue Glu491. Ser517 functions as the Proton acceptor in the catalytic mechanism.

The protein belongs to the IlvD/Edd family. Homodimer. It depends on [2Fe-2S] cluster as a cofactor. The cofactor is Mg(2+).

It carries out the reaction (2R)-2,3-dihydroxy-3-methylbutanoate = 3-methyl-2-oxobutanoate + H2O. The catalysed reaction is (2R,3R)-2,3-dihydroxy-3-methylpentanoate = (S)-3-methyl-2-oxopentanoate + H2O. Its pathway is amino-acid biosynthesis; L-isoleucine biosynthesis; L-isoleucine from 2-oxobutanoate: step 3/4. The protein operates within amino-acid biosynthesis; L-valine biosynthesis; L-valine from pyruvate: step 3/4. In terms of biological role, functions in the biosynthesis of branched-chain amino acids. Catalyzes the dehydration of (2R,3R)-2,3-dihydroxy-3-methylpentanoate (2,3-dihydroxy-3-methylvalerate) into 2-oxo-3-methylpentanoate (2-oxo-3-methylvalerate) and of (2R)-2,3-dihydroxy-3-methylbutanoate (2,3-dihydroxyisovalerate) into 2-oxo-3-methylbutanoate (2-oxoisovalerate), the penultimate precursor to L-isoleucine and L-valine, respectively. The chain is Dihydroxy-acid dehydratase from Escherichia coli O17:K52:H18 (strain UMN026 / ExPEC).